A 679-amino-acid chain; its full sequence is Glutamine-dependent NAD(+) synthetase (679 aa).

The CN hydrolase domain occupies 12–276; it reads VRVAACTHHT…VRRSVADVDT (265 aa). Glu-52 functions as the Proton acceptor; for glutaminase activity in the catalytic mechanism. Lys-121 acts as the For glutaminase activity in catalysis. Tyr-127 contributes to the L-glutamine binding site. Cys-176 serves as the catalytic Nucleophile; for glutaminase activity. L-glutamine is bound by residues Ser-203 and Arg-209. The ligase stretch occupies residues 337–679; that stretch reads QQDCYEAYNI…DQIDREVPKG (343 aa). 366 to 373 contributes to the ATP binding site; it reads GVSGGLDS. Deamido-NAD(+) is bound at residue Asn-456. Thr-480 is a binding site for ATP. Residues Glu-485, 490–493, and Lys-635 each bind deamido-NAD(+); that span reads WSTY. Residues 639–658 are disordered; it reads LPNGPKVSHGGALSPRGDWR.

This sequence in the C-terminal section; belongs to the NAD synthetase family.

The enzyme catalyses deamido-NAD(+) + L-glutamine + ATP + H2O = L-glutamate + AMP + diphosphate + NAD(+) + H(+). Its pathway is cofactor biosynthesis; NAD(+) biosynthesis; NAD(+) from deamido-NAD(+) (L-Gln route): step 1/1. Catalyzes the ATP-dependent amidation of deamido-NAD to form NAD. Uses L-glutamine as a nitrogen source. This chain is Glutamine-dependent NAD(+) synthetase, found in Mycobacterium bovis (strain ATCC BAA-935 / AF2122/97).